The chain runs to 442 residues: Glycoprotein endo-alpha-1,2-mannosidase-like protein (442 aa).

The Cytoplasmic portion of the chain corresponds to 1 to 8; the sequence is MNRLRRKA. A helical; Signal-anchor for type II membrane protein transmembrane segment spans residues 9–29; that stretch reads CVALLLFTLFIFGTMMGLRTL. The Lumenal portion of the chain corresponds to 30 to 442; it reads KPTDGFSDLA…FSKEKEQWLM (413 aa).

Belongs to the glycosyl hydrolase 99 family.

The protein localises to the golgi apparatus membrane. In Danio rerio (Zebrafish), this protein is Glycoprotein endo-alpha-1,2-mannosidase-like protein (maneal).